We begin with the raw amino-acid sequence, 110 residues long: Red pigment-concentrating prohormone (110 aa).

The signal sequence occupies residues 1–25 (MVRRTGVTLLVVALVVVALVSSVSA). The residue at position 26 (Gln26) is a Pyrrolidone carboxylic acid. Trp33 is modified (tryptophan amide).

It belongs to the AKH/HRTH/RPCH family.

It is found in the secreted. This hormone adapts the animal to light backgrounds by stimulating concentration of the pigment of its red body-chromatophores. The sequence is that of Red pigment-concentrating prohormone from Carcinus maenas (Common shore crab).